Consider the following 176-residue polypeptide: Shikimate kinase (176 aa).

14–19 (GAGKST) contributes to the ATP binding site. Serine 18 contacts Mg(2+). Substrate contacts are provided by aspartate 36, arginine 60, and glycine 83. Arginine 121 serves as a coordination point for ATP. Arginine 140 contacts substrate.

It belongs to the shikimate kinase family. Monomer. The cofactor is Mg(2+).

The protein localises to the cytoplasm. The enzyme catalyses shikimate + ATP = 3-phosphoshikimate + ADP + H(+). The protein operates within metabolic intermediate biosynthesis; chorismate biosynthesis; chorismate from D-erythrose 4-phosphate and phosphoenolpyruvate: step 5/7. Catalyzes the specific phosphorylation of the 3-hydroxyl group of shikimic acid using ATP as a cosubstrate. This chain is Shikimate kinase, found in Francisella philomiragia subsp. philomiragia (strain ATCC 25017 / CCUG 19701 / FSC 153 / O#319-036).